A 405-amino-acid chain; its full sequence is Tryptophan synthase beta chain (405 aa).

At lysine 98 the chain carries N6-(pyridoxal phosphate)lysine.

The protein belongs to the TrpB family. In terms of assembly, tetramer of two alpha and two beta chains. Requires pyridoxal 5'-phosphate as cofactor.

It catalyses the reaction (1S,2R)-1-C-(indol-3-yl)glycerol 3-phosphate + L-serine = D-glyceraldehyde 3-phosphate + L-tryptophan + H2O. It participates in amino-acid biosynthesis; L-tryptophan biosynthesis; L-tryptophan from chorismate: step 5/5. Its function is as follows. The beta subunit is responsible for the synthesis of L-tryptophan from indole and L-serine. This Xanthomonas oryzae pv. oryzae (strain MAFF 311018) protein is Tryptophan synthase beta chain.